Consider the following 842-residue polypeptide: Protein P (842 aa).

Positions 1-177 (MPLSYQHFRR…FCGSPYSWEQ (177 aa)) are terminal protein domain (TP). The interval 178–345 (ELHHGAFLDG…YCLTHLVNLL (168 aa)) is spacer. Residues 205 to 271 (SRPPVGSSIQ…RHAKNIASRP (67 aa)) form a disordered region. The span at 223–239 (GPQSQQRPLDGSQQGRS) shows a compositional bias: polar residues. Residues 346–689 (EDWGPCTEHG…YLNLYPVARQ (344 aa)) are polymerase/reverse transcriptase domain (RT). Positions 356–599 (KHHIRIPRTP…YSLNFMGYVI (244 aa)) constitute a Reverse transcriptase domain. The Mg(2+) site is built by aspartate 428, aspartate 550, and aspartate 551.

The protein belongs to the hepadnaviridae P protein family.

It carries out the reaction DNA(n) + a 2'-deoxyribonucleoside 5'-triphosphate = DNA(n+1) + diphosphate. It catalyses the reaction Endonucleolytic cleavage to 5'-phosphomonoester.. With respect to regulation, activated by host HSP70 and HSP40 in vitro to be able to bind the epsilon loop of the pgRNA. Because deletion of the RNase H region renders the protein partly chaperone-independent, the chaperones may be needed indirectly to relieve occlusion of the RNA-binding site by this domain. Inhibited by several reverse-transcriptase inhibitors: Lamivudine, Adefovir and Entecavir. Functionally, multifunctional enzyme that converts the viral RNA genome into dsDNA in viral cytoplasmic capsids. This enzyme displays a DNA polymerase activity that can copy either DNA or RNA templates, and a ribonuclease H (RNase H) activity that cleaves the RNA strand of RNA-DNA heteroduplexes in a partially processive 3'- to 5'-endonucleasic mode. Neo-synthesized pregenomic RNA (pgRNA) are encapsidated together with the P protein, and reverse-transcribed inside the nucleocapsid. Initiation of reverse-transcription occurs first by binding the epsilon loop on the pgRNA genome, and is initiated by protein priming, thereby the 5'-end of (-)DNA is covalently linked to P protein. Partial (+)DNA is synthesized from the (-)DNA template and generates the relaxed circular DNA (RC-DNA) genome. After budding and infection, the RC-DNA migrates in the nucleus, and is converted into a plasmid-like covalently closed circular DNA (cccDNA). The activity of P protein does not seem to be necessary for cccDNA generation, and is presumably released from (+)DNA by host nuclear DNA repair machinery. The protein is Protein P of Hepatitis B virus genotype E subtype ayw4 (isolate Kou) (HBV-E).